Reading from the N-terminus, the 302-residue chain is Calpain-1 catalytic subunit (302 aa).

The domain III stretch occupies residues 1–114; the sequence is RESGCSFVLA…KRAGTQELDD (114 aa). The segment at 115 to 130 is linker; it reads QIQANLPDEQVLSAEE. A domain IV region spans residues 131 to 301; it reads IDENFKALFR…LFKWLQLTMF (171 aa). 3 consecutive EF-hand domains span residues 173-206, 203-238, and 268-302; these read FSME…NRIR, NRIR…AGFK, and VRLE…TMFA. Positions 186, 188, 190, 192, 197, 216, 218, 220, 222, and 227 each coordinate Ca(2+).

It belongs to the peptidase C2 family. Forms a heterodimer with a small (regulatory) subunit CAPNS1. Ca(2+) is required as a cofactor. The N-terminus is blocked. Post-translationally, undergoes calcium-induced successive autoproteolytic cleavages that generate a membrane-bound 78 kDa active form and an intracellular 75 kDa active form. Calpastatin reduces with high efficiency the transition from 78 kDa to 75 kDa calpain forms. In terms of tissue distribution, ubiquitous.

Its subcellular location is the cytoplasm. The protein resides in the cell membrane. It catalyses the reaction Broad endopeptidase specificity.. Activated by micromolar concentrations of calcium and inhibited by calpastatin. Its function is as follows. Calcium-regulated non-lysosomal thiol-protease which catalyzes limited proteolysis of substrates involved in cytoskeletal remodeling and signal transduction. Proteolytically cleaves CTBP1. Cleaves and activates caspase-7 (CASP7). The protein is Calpain-1 catalytic subunit of Oryctolagus cuniculus (Rabbit).